The sequence spans 169 residues: Ribosome maturation factor RimM (169 aa).

In terms of domain architecture, PRC barrel spans 94 to 168 (DDEFYHADLI…RIVADPPEGL (75 aa)).

This sequence belongs to the RimM family. Binds ribosomal protein uS19.

It localises to the cytoplasm. Functionally, an accessory protein needed during the final step in the assembly of 30S ribosomal subunit, possibly for assembly of the head region. Essential for efficient processing of 16S rRNA. May be needed both before and after RbfA during the maturation of 16S rRNA. It has affinity for free ribosomal 30S subunits but not for 70S ribosomes. This chain is Ribosome maturation factor RimM, found in Cereibacter sphaeroides (strain ATCC 17029 / ATH 2.4.9) (Rhodobacter sphaeroides).